The chain runs to 1149 residues: Potassium channel subfamily U member 1 (1149 aa).

Residues 1-24 lie on the Extracellular side of the membrane; that stretch reads MFQTKLRNETWEDLPKMSCTTEIQ. The helical transmembrane segment at 25–45 threads the bilayer; that stretch reads AAFILSSFVTFFSGLIILLIF. At 46–101 the chain is on the cytoplasmic side; sequence RLIWRSVKKWQIIKGTGIILELFTSGTIARSHVRSLHFQGQFRDHIEMLLSAQTFV. The helical transmembrane segment at 102–122 threads the bilayer; that stretch reads GQVLVILVFVLSIGSLIIYFI. The Extracellular portion of the chain corresponds to 123–138; the sequence is NSADPVGSCSSYEDKT. The helical transmembrane segment at 139-159 threads the bilayer; sequence IPIDLVFNAFFSFYFGLRFMA. At 160-163 the chain is on the cytoplasmic side; that stretch reads ADDK. Residues 164-184 traverse the membrane as a helical segment; the sequence is IKFWLEMNSIVDIFTIPPTFI. The Extracellular segment spans residues 185–188; sequence SYYL. The chain crosses the membrane as a helical; Voltage-sensor span at residues 189–209; sequence KSNWLGLRFLRALRLLELPQI. Residues 210–226 lie on the Cytoplasmic side of the membrane; it reads LQILRAIKTSNSVKFSK. A helical transmembrane segment spans residues 227-247; sequence LLSIILSTWFTAAGFIHLVEN. Over 248-259 the chain is Extracellular; that stretch reads SGDPWLKGRNSQ. An intramembrane region (pore-forming) is located at residues 260-282; it reads NISYFESIYLVMATTSTVGFGDV. The Selectivity for potassium signature appears at 276 to 279; it reads TVGF. Residues 283 to 291 lie on the Extracellular side of the membrane; it reads VAKTSLGRT. Residues 292 to 312 traverse the membrane as a helical segment; the sequence is FIMFFTLGSLILFANYIPEMV. Topologically, residues 313 to 1149 are cytoplasmic; that stretch reads ELFANKRKYT…EDPFAYSEPL (837 aa). 2 consecutive RCK N-terminal domains span residues 331 to 473 and 713 to 884; these read KKFI…DNII and RNHI…EGSL. 2 disordered regions span residues 828–854 and 1118–1149; these read QIDSSSDPSPSVSEETPGYTNGHNEKS and SQIPLGDNAKENERKTSDEVYDEDPFAYSEPL. Residues 830–840 show a composition bias toward low complexity; that stretch reads DSSSDPSPSVS. Residues 1125-1135 show a composition bias toward basic and acidic residues; it reads NAKENERKTSD.

Belongs to the potassium channel family. Calcium-activated (TC 1.A.1.3) subfamily. KCa5.1/KCNU1 sub-subfamily. In terms of assembly, homotetramer; which constitutes the activated potassium channel. Interacts with LRRC52; this interaction changes channel gating properties, such as shifting gating to more negative potentials at a given pH. As to expression, testis-specific.

It localises to the cell membrane. It is found in the cell projection. Its subcellular location is the cilium. The protein localises to the flagellum membrane. The catalysed reaction is K(+)(in) = K(+)(out). Its activity is regulated as follows. Regulated by changes in cytosolic pH; activated by alkalization. Activated by intracellular Ca(2+). Despite strong sequence similarity, human KCNU1 channels are significantly more sensitive to activation by internal Ca(2+) and less pH-sensitive than mouse KCNU1. VU0546110 acts as a selective inhibitor. The auxiliary subunit LRRC52 shifts the activation of KCNU1 to more negative potentials at a given pH. Functionally, testis-specific potassium channel activated by both intracellular pH and membrane voltage that mediates export of K(+). Represents the primary spermatozoan K(+) current. The channel underlies a pH-triggered membrane hyperpolarization during the process of sperm capacitation, as sperm encounter the alkaline environment near the ovum in the female reproductive tract, thereby playing an essential for male fertility. This is Potassium channel subfamily U member 1 from Homo sapiens (Human).